A 173-amino-acid chain; its full sequence is Calcium-binding protein 5 (173 aa).

4 EF-hand domains span residues 28–63 (DEIE…MGYM), 82–99 (GRVD…KLLA), 105–140 (IGVQ…LLGD), and 142–173 (LTSQ…MMSR). Positions 41, 43, 45, and 52 each coordinate Ca(2+). Ca(2+) is bound by residues Asp-118, Asn-120, Asp-122, Glu-124, Glu-129, Asp-155, Asn-157, Asp-159, Thr-161, and Glu-166.

In terms of assembly, interacts with CACNA1C (via C-terminal CDB motif) in a calcium-dependent manner. Interacts with STXBP1. Interacts with MYO6. In terms of tissue distribution, expressed in the retina (at protein level).

Its subcellular location is the cytoplasm. Functionally, inhibits calcium-dependent inactivation of L-type calcium channel and shifts voltage dependence of activation to more depolarized membrane potentials. Involved in the transmission of light signals. May positively regulate neurotransmitter vesicle endocytosis and exocytosis in a salt-dependent manner. May play a role in the extension and network organization of neurites. The sequence is that of Calcium-binding protein 5 (CABP5) from Bos taurus (Bovine).